The chain runs to 577 residues: Sulfite reductase [NADPH] hemoprotein beta-component (577 aa).

Positions 441, 447, 486, and 490 each coordinate [4Fe-4S] cluster. A siroheme-binding site is contributed by Cys-490.

Belongs to the nitrite and sulfite reductase 4Fe-4S domain family. As to quaternary structure, alpha(8)-beta(8). The alpha component is a flavoprotein, the beta component is a hemoprotein. The cofactor is siroheme. [4Fe-4S] cluster is required as a cofactor.

The catalysed reaction is hydrogen sulfide + 3 NADP(+) + 3 H2O = sulfite + 3 NADPH + 4 H(+). It functions in the pathway sulfur metabolism; hydrogen sulfide biosynthesis; hydrogen sulfide from sulfite (NADPH route): step 1/1. In terms of biological role, component of the sulfite reductase complex that catalyzes the 6-electron reduction of sulfite to sulfide. This is one of several activities required for the biosynthesis of L-cysteine from sulfate. The chain is Sulfite reductase [NADPH] hemoprotein beta-component from Pectobacterium atrosepticum (strain SCRI 1043 / ATCC BAA-672) (Erwinia carotovora subsp. atroseptica).